Here is a 406-residue protein sequence, read N- to C-terminus: Zinc finger protein CONSTANS-LIKE 6 (406 aa).

Zn(2+) contacts are provided by Cys17, Cys20, Cys40, and His45. A B box-type; atypical zinc finger spans residues 17–59; sequence CDSCVKRRARWYCAADDAFLCHACDGSVHSANPLARRHERVRL. Residues 63–95 form a disordered region; that stretch reads SAGKYRHASPPHQATWHQGFTRKARTPRGGKKS. A compositionally biased stretch (basic residues) spans 82–95; it reads FTRKARTPRGGKKS. The region spanning 357–399 is the CCT domain; that stretch reads REARVSRYREKRRTRLFSKKIRYEVRKLNAEKRPRMKGRFVKR.

This sequence belongs to the CONSTANS family.

The protein localises to the nucleus. The sequence is that of Zinc finger protein CONSTANS-LIKE 6 (COL6) from Arabidopsis thaliana (Mouse-ear cress).